We begin with the raw amino-acid sequence, 393 residues long: Rhizopuspepsin (393 aa).

The signal sequence occupies residues 1–21 (MKFTLISSCIAIAALAVAVDA). The propeptide at 22 to 68 (APGEKKISIPLAKNPNYKPSAKNAIQKAIAKYNKHKINTSTGGIVPD) is activation peptide. A Peptidase A1 domain is found at 85 to 389 (YYGQVTIGTP…NQGVPEVQIA (305 aa)). The active site involves Asp103. The cysteines at positions 116 and 119 are disulfide-linked. Asp286 is an active-site residue. Residues Cys320 and Cys353 are joined by a disulfide bond.

The protein belongs to the peptidase A1 family.

It carries out the reaction Hydrolysis of proteins with broad specificity similar to that of pepsin A, preferring hydrophobic residues at P1 and P1'. Clots milk and activates trypsinogen. Does not cleave 4-Gln-|-His-5, but does cleave 10-His-|-Leu-11 and 12-Val-|-Glu-13 in B chain of insulin.. In Rhizopus chinensis (Bread mold), this protein is Rhizopuspepsin.